The following is a 671-amino-acid chain: MADKKRYEELINILDQYSYDYYVIDNPTVEDAEYDQKMQELLKIEEAHPEWVTPESPSKRVGGEVLEGFKKVAHDTPMLSLANAFNQEDLADFDRRIRDKVGDDIAYMCELKIDGLAVSLQYENGKYKQGATRGDGTIGEDITANLRTIRSIPMKLQKDYSIEVRGEAFMPKRSFQKLNEIREEEGQMLFANPRNAAAGSLRQLDTKIAASRNLDIFLYAVADFGEMGVETHSAGLDMLETLGLKVNKERRLCNSLEEVYAYIEEWTEKRAGLAYDIDGIVLKLNNLEQQRQMGNTVKSPRWSIAYKFPAEEVPTKLLDIELNVGRTGVITPTAVLEPVRVAGTTVSRASLHNEDLITEKDIRIGDTVLIKKAGDIIPEVIKSITEKRSGSEEPFHMPKNCPACDSELVRLEEEVALRCINPKCPAQIKEGLIHFVSRNAMNIDGLGEKVIIQLFSQHLIKDVADLFFLSKEKLLELERMGEKSVTNLLASIEASKQNSLEKLLFGLGIRHVGAKAAKSLAIHFDTMDNLKVADKETLTSINDIGEKMADSIVTYFANEEVHDLLEELKRAGVNMTYTGPKLEDMSEEELVFAGKTVVLTGKLEKLTRNDAKALIESLGGNVSGSVSKKTDVVVAGSDAGSKLAKAEELAIPIWSEEDLIEYLPDEGGLNE.

Residues 31–35 (DAEYD), 80–81 (SL), and Glu110 contribute to the NAD(+) site. Lys112 functions as the N6-AMP-lysine intermediate in the catalytic mechanism. Residues Arg133, Glu167, Lys283, and Lys307 each contribute to the NAD(+) site. Residues Cys401, Cys404, Cys419, and Cys424 each contribute to the Zn(2+) site. The BRCT domain maps to 587–671 (EEELVFAGKT…YLPDEGGLNE (85 aa)).

It belongs to the NAD-dependent DNA ligase family. LigA subfamily. The cofactor is Mg(2+). It depends on Mn(2+) as a cofactor.

It carries out the reaction NAD(+) + (deoxyribonucleotide)n-3'-hydroxyl + 5'-phospho-(deoxyribonucleotide)m = (deoxyribonucleotide)n+m + AMP + beta-nicotinamide D-nucleotide.. In terms of biological role, DNA ligase that catalyzes the formation of phosphodiester linkages between 5'-phosphoryl and 3'-hydroxyl groups in double-stranded DNA using NAD as a coenzyme and as the energy source for the reaction. It is essential for DNA replication and repair of damaged DNA. This is DNA ligase from Listeria monocytogenes serotype 4b (strain CLIP80459).